A 90-amino-acid polypeptide reads, in one-letter code: Probable Fe(2+)-trafficking protein (90 aa).

This sequence belongs to the Fe(2+)-trafficking protein family.

Functionally, could be a mediator in iron transactions between iron acquisition and iron-requiring processes, such as synthesis and/or repair of Fe-S clusters in biosynthetic enzymes. This Pseudomonas aeruginosa (strain UCBPP-PA14) protein is Probable Fe(2+)-trafficking protein.